A 292-amino-acid chain; its full sequence is Tetratricopeptide repeat protein 1 (292 aa).

The interval 23 to 125 (TQEAECAGPP…STRLKEEGNE (103 aa)) is disordered. 2 stretches are compositionally biased toward basic and acidic residues: residues 45–55 (LLRDDEAHLQE) and 75–85 (GADKVENKSNE). A phosphoserine mark is found at serine 83 and serine 90. Residues 99-125 (ELEKNMSDEEKQKRREESTRLKEEGNE) show a composition bias toward basic and acidic residues. TPR repeat units lie at residues 116–149 (STRL…CPSC), 155–188 (SILF…NPSY), and 189–222 (IRAI…DPSI).

As to quaternary structure, interacts with the GAP domain of NF1. Interacts (via TPR repeats) with HSP90AA1 and HSPA8.

This is Tetratricopeptide repeat protein 1 (TTC1) from Homo sapiens (Human).